Reading from the N-terminus, the 1482-residue chain is Cystic fibrosis transmembrane conductance regulator (1482 aa).

The Cytoplasmic segment spans residues 1–77 (MQRSPLEKAS…KLINALQRCF (77 aa)). The helical transmembrane segment at 78 to 98 (FWRFTFYGILLYLGEVTKAIQ) threads the bilayer. The region spanning 81 to 365 (FTFYGILLYL…WAVQTWYDSL (285 aa)) is the ABC transmembrane type-1 1 domain. Residues 99–122 (PLLLGRIIASYDPDNKMERSIAIY) lie on the Extracellular side of the membrane. The chain crosses the membrane as a helical span at residues 123-146 (LGIGLCLLFIMRTLLLHPAIFGLH). Residues 147 to 195 (HIGMQMRIALFSLIYKKTLKLSSRVLDKISIGQLVSLLSNNLNKFDEGL) are Cytoplasmic-facing. The chain crosses the membrane as a helical span at residues 196-216 (ALAHFVWIAPLQVMLLMGLLW). At 217-222 (ELLQAS) the chain is on the extracellular side. Residues 223 to 243 (AFCGLAFLIVLALLQAGLGRM) traverse the membrane as a helical segment. The Cytoplasmic segment spans residues 244–298 (MMKYRDQRAGKINERLVITSEMIENIQSVKAYCWEEAMEKMIENLRQTELRLTRK). The helical transmembrane segment at 299 to 319 (AAYVRYVNSSAFFFSGFFVVF) threads the bilayer. The Extracellular segment spans residues 320 to 339 (LSVLPYALIKGIILRKIFTT). Residues 340 to 358 (ISFCIVLRMAVTRQFPWAV) form a helical membrane-spanning segment. Over 359–859 (QTWYDSLGAI…YLRYITVHKN (501 aa)) the chain is Cytoplasmic. ATP contacts are provided by residues tryptophan 401, 458 to 465 (GSTGAGKT), and glutamine 493. The region spanning 423 to 646 (SGDNRLFFSN…RPDFSSKLMG (224 aa)) is the ABC transporter 1 domain. Residue cysteine 524 is the site of S-palmitoyl cysteine attachment. Residues serine 549 and serine 660 each carry the phosphoserine modification. The segment at 654–832 (SAERRNSILT…EEINEEDLKE (179 aa)) is disordered R region. Position 670 is a phosphoserine; by PKA (serine 670). Serine 686 bears the Phosphoserine mark. Lysine 688 participates in a covalent cross-link: Glycyl lysine isopeptide (Lys-Gly) (interchain with G-Cter in ubiquitin). Serine 700 and serine 712 each carry phosphoserine. Threonine 717 is modified (phosphothreonine). Phosphoserine is present on residues serine 737, serine 768, serine 791, serine 796, and serine 814. A helical transmembrane segment spans residues 860–880 (LIFVLIWCLVIFLAEVAASLV). The region spanning 860-1156 (LIFVLIWCLV…AVNSSIDVDS (297 aa)) is the ABC transmembrane type-1 2 domain. Residues 881–919 (AFWLIEKTRPQDKGNSTRSTNNTSPVIITSTSAFYMFYI) are Extracellular-facing. Asparagine 895 and asparagine 901 each carry an N-linked (GlcNAc...) asparagine glycan. A discontinuously helical membrane pass occupies residues 920-940 (YVGVADSLLALGFLRGLPLVH). The Cytoplasmic portion of the chain corresponds to 941-991 (TLITVSKILHQKMLHSVLHAPMSTLNTLKAGAILNRFSKDIAILDDLLPLT). The helical transmembrane segment at 992–1012 (IFDFIQLVLIVIGAVVVVSIL) threads the bilayer. The Extracellular segment spans residues 1013-1014 (KP). A helical membrane pass occupies residues 1015 to 1035 (YIFLAAVPVIIAFVILRAYFL). Over 1036 to 1096 (QTSQQLKQLE…TATWFLYLST (61 aa)) the chain is Cytoplasmic. Residues 1097 to 1117 (LRWFQMRIEMIFVVFFVAVTF) traverse the membrane as a helical segment. Topologically, residues 1118–1131 (ISILTTGEGEGTVG) are extracellular. Residues 1132 to 1152 (IILTLAMNIMSTLQWAVNSSI) traverse the membrane as a helical segment. Over 1153 to 1482 (DVDSLMRSVS…AEEEVQDTRL (330 aa)) the chain is Cytoplasmic. The ABC transporter 2 domain occupies 1212 to 1445 (ITVKDLTAKY…KSLFQQAISP (234 aa)). ATP contacts are provided by residues tyrosine 1221 and 1246–1253 (GRTGSGKS). Positions 1388-1482 (RALKQAFADC…AEEEVQDTRL (95 aa)) are interaction with GORASP2. Cysteine 1397 carries the S-palmitoyl cysteine lipid modification. Serine 1446 and serine 1458 each carry phosphoserine. The disordered stretch occupies residues 1454-1482 (QRSSSKHRSRAQITALKEEAEEEVQDTRL). A compositionally biased stretch (acidic residues) spans 1472 to 1482 (EAEEEVQDTRL). The short motif at 1480 to 1482 (TRL) is the PDZ-binding element.

The protein belongs to the ABC transporter superfamily. ABCC family. CFTR transporter (TC 3.A.1.202) subfamily. As to quaternary structure, monomer; does not require oligomerization for channel activity. May form oligomers in the membrane. Interacts with SLC26A3, SLC26A6 and NHERF1. Interacts with SHANK2. Interacts with MYO6. Interacts (via C-terminus) with GOPC (via PDZ domain); this promotes CFTR internalization and thereby decreases channel activity. Interacts with SLC4A7 through NHERF1. Found in a complex with MYO5B and RAB11A. Interacts with ANO1. Interacts with SLC26A8. Interacts with AHCYL1; the interaction increases CFTR activity. Interacts with CSE1L. The core-glycosylated form interacts with GORASP2 (via PDZ GRASP-type 1 domain) in respone to ER stress. Interacts with MARCHF2; the interaction leads to CFTR ubiqtuitination and degradation. Interacts with ADGRG2. N-glycosylated. Post-translationally, phosphorylated; cAMP treatment promotes phosphorylation and activates the channel. Dephosphorylation decreases the ATPase activity (in vitro). Phosphorylation at PKA sites activates the channel. Phosphorylation at PKC sites enhances the response to phosphorylation by PKA. Phosphorylated by AMPK; this inhibits channel activity. In terms of processing, ubiquitinated, leading to its degradation in the lysosome. Deubiquitination by USP10 in early endosomes enhances its endocytic recycling to the cell membrane. Ubiquitinated by RNF185 during ER stress. Ubiquitinated by MARCHF2.

It localises to the apical cell membrane. The protein localises to the early endosome membrane. It is found in the cell membrane. Its subcellular location is the recycling endosome membrane. The protein resides in the endoplasmic reticulum membrane. It localises to the nucleus. The catalysed reaction is ATP + H2O + closed Cl(-) channel = ADP + phosphate + open Cl(-) channel.. It catalyses the reaction chloride(in) = chloride(out). It carries out the reaction hydrogencarbonate(in) = hydrogencarbonate(out). The enzyme catalyses ATP + H2O = ADP + phosphate + H(+). Its function is as follows. Epithelial ion channel that plays an important role in the regulation of epithelial ion and water transport and fluid homeostasis. Mediates the transport of chloride ions across the cell membrane. Possesses an intrinsic ATPase activity and utilizes ATP to gate its channel; the passive flow of anions through the channel is gated by cycles of ATP binding and hydrolysis by the ATP-binding domains. The ion channel is also permeable to HCO(3)(-); selectivity depends on the extracellular chloride concentration. Exerts its function also by modulating the activity of other ion channels and transporters. Contributes to the regulation of the pH and the ion content of the epithelial fluid layer. Modulates the activity of the epithelial sodium channel (ENaC) complex, in part by regulating the cell surface expression of the ENaC complex. May regulate bicarbonate secretion and salvage in epithelial cells by regulating the transporter SLC4A7. Can inhibit the chloride channel activity of ANO1. Plays a role in the chloride and bicarbonate homeostasis during sperm epididymal maturation and capacitation. The polypeptide is Cystic fibrosis transmembrane conductance regulator (Rhinolophus ferrumequinum (Greater horseshoe bat)).